Consider the following 329-residue polypeptide: Glycerol-3-phosphate dehydrogenase [NAD(P)+] (329 aa).

The NADPH site is built by W11 and K101. Positions 101, 132, and 134 each coordinate sn-glycerol 3-phosphate. Residue A136 participates in NADPH binding. Residues K188, D241, S251, R252, and N253 each coordinate sn-glycerol 3-phosphate. Catalysis depends on K188, which acts as the Proton acceptor. An NADPH-binding site is contributed by R252. E278 contacts NADPH.

The protein belongs to the NAD-dependent glycerol-3-phosphate dehydrogenase family.

Its subcellular location is the cytoplasm. The catalysed reaction is sn-glycerol 3-phosphate + NAD(+) = dihydroxyacetone phosphate + NADH + H(+). It carries out the reaction sn-glycerol 3-phosphate + NADP(+) = dihydroxyacetone phosphate + NADPH + H(+). The protein operates within membrane lipid metabolism; glycerophospholipid metabolism. Functionally, catalyzes the reduction of the glycolytic intermediate dihydroxyacetone phosphate (DHAP) to sn-glycerol 3-phosphate (G3P), the key precursor for phospholipid synthesis. This Onion yellows phytoplasma (strain OY-M) protein is Glycerol-3-phosphate dehydrogenase [NAD(P)+].